Reading from the N-terminus, the 401-residue chain is Probable inactive purple acid phosphatase 14 (401 aa).

The first 30 residues, 1-30 (MEETRRRFVISSVLSVSLIYLCLSTCHVSA), serve as a signal peptide directing secretion. N-linked (GlcNAc...) asparagine glycosylation occurs at Asn79. Asn197 is a substrate binding site. Asn197 contacts Zn(2+). Asn246 carries an N-linked (GlcNAc...) asparagine glycan. Residue His256 participates in Zn(2+) binding. N-linked (GlcNAc...) asparagine glycosylation is present at Asn266. His305 contacts Zn(2+). 305–307 (HDH) contributes to the substrate binding site. His307 contacts Fe cation. Asn371 and Asn384 each carry an N-linked (GlcNAc...) asparagine glycan.

The protein belongs to the metallophosphoesterase superfamily. Purple acid phosphatase family. In terms of assembly, homodimer. Fe cation is required as a cofactor. Zn(2+) serves as cofactor. As to expression, specifically expressed in flowers.

It localises to the secreted. In Arabidopsis thaliana (Mouse-ear cress), this protein is Probable inactive purple acid phosphatase 14 (PAP14).